Here is a 33-residue protein sequence, read N- to C-terminus: Photosystem II reaction center protein Psb30 (33 aa).

The helical transmembrane segment at 8 to 28 (QLTALAFIVLSGPLVIALLAF) threads the bilayer.

This sequence belongs to the Psb30/Ycf12 family. As to quaternary structure, PSII is composed of 1 copy each of membrane proteins PsbA, PsbB, PsbC, PsbD, PsbE, PsbF, PsbH, PsbI, PsbJ, PsbK, PsbL, PsbM, PsbT, PsbX, PsbY, PsbZ, Psb30/Ycf12, peripheral proteins of the oxygen-evolving complex and a large number of cofactors. It forms dimeric complexes.

The protein localises to the plastid. The protein resides in the chloroplast thylakoid membrane. Functionally, a core subunit of photosystem II (PSII), probably helps stabilize the reaction center. The chain is Photosystem II reaction center protein Psb30 from Staurastrum punctulatum (Green alga).